The chain runs to 445 residues: Phosphoglucosamine mutase (445 aa).

Ser101 (phosphoserine intermediate) is an active-site residue. Mg(2+) is bound by residues Ser101, Asp240, Asp242, and Asp244. Position 101 is a phosphoserine (Ser101).

Belongs to the phosphohexose mutase family. Mg(2+) serves as cofactor. In terms of processing, activated by phosphorylation.

It carries out the reaction alpha-D-glucosamine 1-phosphate = D-glucosamine 6-phosphate. In terms of biological role, catalyzes the conversion of glucosamine-6-phosphate to glucosamine-1-phosphate. This is Phosphoglucosamine mutase from Pseudomonas aeruginosa (strain UCBPP-PA14).